The following is a 332-amino-acid chain: Melanocortin receptor 4 (332 aa).

The Extracellular portion of the chain corresponds to 1–43 (MNSTQPLGMHTSLHSWNRSAHGMPTNVSESLAKGYSDGGCYEQ). 3 N-linked (GlcNAc...) asparagine glycosylation sites follow: Asn-2, Asn-17, and Asn-26. Cystine bridges form between Cys-40–Cys-279 and Cys-271–Cys-277. Residues 44 to 69 (LFVSPEVFVTLGVISLLENILVIVAI) form a helical membrane-spanning segment. The Cytoplasmic segment spans residues 70–81 (AKNKNLHSPMYF). Residues 82 to 106 (FICSLAVADMLVSVSNGSETIVITL) traverse the membrane as a helical segment. Glu-100, Asp-122, and Asp-126 together coordinate Ca(2+). Residues 107–123 (LNSTDTDAQSFTVDIDN) lie on the Extracellular side of the membrane. Residues 124 to 145 (VIDSVICSSLLASICSLLSIAV) form a helical membrane-spanning segment. The Cytoplasmic portion of the chain corresponds to 146 to 165 (DRYFTIFYALQYHNIMTVKR). A helical membrane pass occupies residues 166 to 186 (VAITISAIWAACTVSGVLFII). The Extracellular segment spans residues 187–191 (YSDSS). Residues 192 to 215 (AVIICLITVFFTMLALMASLYVHM) form a helical membrane-spanning segment. Topologically, residues 216–248 (FLMARLHIKRIAVLPGSGTIRQGANMKGAITLT) are cytoplasmic. A helical transmembrane segment spans residues 249–271 (ILIGVFVVCWAPFFLHLIFYISC). The Extracellular segment spans residues 272–280 (PQNPYCVCF). The helical transmembrane segment at 281–304 (MSHFNLYLILIMCNSIIDPLIYAL) threads the bilayer. The Cytoplasmic segment spans residues 305 to 332 (RSQELRKTFKEIICCSPLGGLCDLSSRY). The S-palmitoyl cysteine moiety is linked to residue Cys-318.

Belongs to the G-protein coupled receptor 1 family. In terms of assembly, homodimer; disulfide-linked, also forms higher order oligomers. Interacts with GNAS. Interacts with ATRNL1. Interacts with MGRN1; this interaction competes with GNAS-binding and thus inhibits agonist-induced cAMP production. Interacts with MRAP and MRAP2; these associated factors increase ligand-sensitivity and generation of cAMP.

The protein resides in the cell membrane. Functionally, hormone receptor that acts as a key component of the leptin-melanocortin pathway at the intersection of homeostatic maintenance of energetic state. Plays a role in regulating food intake: activation by a stimulating hormone such as anorexigenic alpha-melanocyte stimulating hormone (alpha-MSH) inhibits appetite, whereas binding to a natural antagonist like Agouti-related protein/AGRP promotes appetite. G-protein-coupled receptor that activates conventional Galphas signaling leading to induction of anorexogenic signaling in the hypothalamus to result in negative energy balance. Regulates the firing activity of neurons from the hypothalamus by alpha-MSH and AGRP independently of Galphas signaling by ligand-induced coupling of closure of inwardly rectifying potassium channel KCNJ13. In intestinal epithelial cells, plays a role in the inhibition of hepatic glucose production via nesfatin-1/NUCB2 leading to increased cyclic adenosine monophosphate (cAMP) levels and glucagon-like peptide 1 (GLP-1) secretion in the intestinal epithelium. This chain is Melanocortin receptor 4 (MC4R), found in Bos taurus (Bovine).